A 305-amino-acid chain; its full sequence is Coiled-coil domain-containing protein 50 (305 aa).

Ala2 carries the post-translational modification N-acetylalanine. A Phosphoserine modification is found at Ser5. The stretch at 86-130 (EIAQEIQEKLTIEAERRRIQEKKDEDIARLLQEKELQEEKRRKKH) forms a coiled coil. Disordered stretches follow at residues 122-142 (QEEKRRKKHTPEFSGGSVFGD) and 218-305 (KKAK…HNKQ). 2 stretches are compositionally biased toward basic and acidic residues: residues 218–239 (KKAKEREKSSLDKRKHDPECKL) and 247–263 (KSKEGDEAHRSKIDRPS). The span at 279-305 (THFTNQHSTTWHLPKSESSQKGFHNKQ) shows a compositional bias: polar residues.

Interacts with RNF126. In terms of processing, phosphorylated on tyrosine residues. Widely expressed.

The protein resides in the cytoplasm. Involved in EGFR signaling. In Mus musculus (Mouse), this protein is Coiled-coil domain-containing protein 50 (Ccdc50).